The chain runs to 96 residues: Phosphoribosyl-ATP pyrophosphatase (96 aa).

Belongs to the PRA-PH family.

Its subcellular location is the cytoplasm. It carries out the reaction 1-(5-phospho-beta-D-ribosyl)-ATP + H2O = 1-(5-phospho-beta-D-ribosyl)-5'-AMP + diphosphate + H(+). The protein operates within amino-acid biosynthesis; L-histidine biosynthesis; L-histidine from 5-phospho-alpha-D-ribose 1-diphosphate: step 2/9. This Methanococcus maripaludis (strain DSM 14266 / JCM 13030 / NBRC 101832 / S2 / LL) protein is Phosphoribosyl-ATP pyrophosphatase.